Consider the following 566-residue polypeptide: MLQRSPRAGPSRAQGRREAAETGGPTTQEGVACGVHQLATLLMELDSEDEASRLLAADALYRLGRLEETHKALLVALSRRPQAAPVLARLALLQLRRGFFYDANQLVKKLVQSGDTACLQPTLDVFCHEDRQLLQGHCHARALAILRARPGGADGRVHTKEAIAYLSLAIFAAGSQASESLLARARCYGFLGQKKTAMFDFNTVLRAEPGNVQALCGRALVHLALDQLQEAVDDIVSALKLGPGTVVPELRSLKPEAQALITQGLYSHCRALLSQLPDTGAPLEDKDTQGLLAVGEALIKIDSGQPHWHLLLADILMAQGSYEEAGTHLEKALHRAPTSEAARARLGLLQLKKGDVPGAARDLQSLAEVDAPDLSCLLHLLEASERQSLAQAAAQEAGTLLDAGQPRQALGYCSLSVLASGSSACHLRLRATCLAELQEFGRALRDLDHVLQEALGDGDLPRRAEDFCRQGRLLLSLGDEAAAAGAFAQALKLAPSLAQNSLCRQPGRAPTARMFLLRGQCCLEEQRHAEAWTAVESGLLVDPDHRGLKRLKARIRREASSGCWLQ.

Residues 1 to 29 (MLQRSPRAGPSRAQGRREAAETGGPTTQE) form a disordered region. TPR repeat units lie at residues 50-83 (EASR…RPQA), 178-211 (SESL…EPGN), 212-245 (VQAL…GPGT), 306-339 (PHWH…APTS), 341-373 (AARA…DAPD), 424-457 (ACHL…ALGD), 464-497 (AEDF…APSL), and 512-545 (ARMF…DPDH).

The polypeptide is Tetratricopeptide repeat protein 34 (TTC34) (Homo sapiens (Human)).